Consider the following 172-residue polypeptide: Translation initiation factor IF-3 (172 aa).

This sequence belongs to the IF-3 family. In terms of assembly, monomer.

It is found in the cytoplasm. IF-3 binds to the 30S ribosomal subunit and shifts the equilibrium between 70S ribosomes and their 50S and 30S subunits in favor of the free subunits, thus enhancing the availability of 30S subunits on which protein synthesis initiation begins. The sequence is that of Translation initiation factor IF-3 from Geobacter metallireducens (strain ATCC 53774 / DSM 7210 / GS-15).